We begin with the raw amino-acid sequence, 489 residues long: Lysine-specific permease LysP (489 aa).

Over 2–22 the chain is Cytoplasmic; that stretch reads VSETKTTEAPGLRRELKARHL. The chain crosses the membrane as a helical span at residues 23–43; that stretch reads TMIAIGGSIGTGLFVASGATI. Over 44 to 45 the chain is Periplasmic; sequence SQ. A helical transmembrane segment spans residues 46–66; the sequence is AGPGGALLSYMLIGLMVYFLM. The Cytoplasmic portion of the chain corresponds to 67 to 105; sequence TSLGELAAYMPVSGSFATYGQNYVEEGFGFALGWNYWYN. The chain crosses the membrane as a helical span at residues 106–126; it reads WAVTIAVDLVAAQLVMSWWFP. The Periplasmic portion of the chain corresponds to 127-128; sequence DT. The chain crosses the membrane as a helical span at residues 129-149; that stretch reads PGWIWSALFLGVIFLLNYISV. The Cytoplasmic portion of the chain corresponds to 150–161; that stretch reads RGFGEAEYWFSL. Residues 162 to 182 form a helical membrane-spanning segment; sequence IKVTTVIVFIIVGVLMIIGIF. At 183–197 the chain is on the periplasmic side; that stretch reads KGAQPAGWSNWTIGE. Residues 198-218 traverse the membrane as a helical segment; it reads APFAGGFAAMIGVAMIVGFSF. Residues 219–244 are Cytoplasmic-facing; the sequence is QGTELIGIAAGESEDPAKNIPRAVRQ. A helical membrane pass occupies residues 245 to 265; sequence VFWRILLFYVFAILIISLIIP. The Periplasmic segment spans residues 266–290; the sequence is YTDPSLLRNDVKDISVSPFTLVFQH. The helical transmembrane segment at 291–311 threads the bilayer; the sequence is AGLLSAAAVMNAVILTAVLSA. Topologically, residues 312–346 are cytoplasmic; sequence GNSGMYASTRMLYTLACDGKAPRIFAKLSRGGVPR. A helical transmembrane segment spans residues 347-367; it reads NALYATTVIAGLCFLTSMFGN. Over 368 to 370 the chain is Periplasmic; that stretch reads QTV. The chain crosses the membrane as a helical span at residues 371–391; it reads YLWLLNTSGMTGFIAWLGIAI. The Cytoplasmic segment spans residues 392-413; sequence SHYRFRRGYVLQGHDINDLPYR. The helical transmembrane segment at 414–434 threads the bilayer; that stretch reads SGFFPLGPIFAFILCLIITLG. Over 435 to 446 the chain is Periplasmic; that stretch reads QNYEAFLKDTID. The chain crosses the membrane as a helical span at residues 447 to 467; that stretch reads WGGVAATYIGIPLFLIIWFGY. Residues 468–489 are Cytoplasmic-facing; the sequence is KLIKGTHFVRYSEMKFPQNDKK.

Belongs to the amino acid-polyamine-organocation (APC) superfamily. Amino acid transporter (AAT) (TC 2.A.3.1) family. Interacts strongly with the transcriptional activator CadC in the absence of lysine or at low lysine concentrations. Interaction is markedly attenuated under increasing lysine levels. Concomitant pH-dependent protonation of periplasmic amino acids in both proteins dissolves their electrostatic connections resulting in further destabilization of the CadC/LysP interaction. Low pH promotes oligomerization of LysP.

Its subcellular location is the cell inner membrane. The catalysed reaction is L-lysine(out) + H(+)(out) = L-lysine(in) + H(+)(in). In terms of biological role, permease involved in lysine uptake. In addition, functions as a lysine sensor that mediates the lysine-dependent regulation of the transcriptional activator CadC. In the absence of lysine, or at low lysine concentrations, LysP inhibits CadC by an interaction with the transmembrane domain of CadC. In the presence of lysine, LysP loses its ability to interact with and inhibit CadC, and acts as a lysine permease. The sequence is that of Lysine-specific permease LysP from Escherichia coli (strain K12).